Reading from the N-terminus, the 440-residue chain is tRNA-2-methylthio-N(6)-dimethylallyladenosine synthase (440 aa).

In terms of domain architecture, MTTase N-terminal spans 7–123; it reads NTFYIHTFGC…LPQLIEQARS (117 aa). [4Fe-4S] cluster is bound by residues Cys16, Cys52, Cys86, Cys159, Cys163, and Cys166. A Radical SAM core domain is found at 145–375; the sequence is RQGSISAFVP…IDLQNTISGE (231 aa). The 63-residue stretch at 378 to 440 folds into the TRAM domain; it reads QQAIGSVVEV…TSATLTGRPV (63 aa).

This sequence belongs to the methylthiotransferase family. MiaB subfamily. In terms of assembly, monomer. [4Fe-4S] cluster serves as cofactor.

The protein localises to the cytoplasm. The enzyme catalyses N(6)-dimethylallyladenosine(37) in tRNA + (sulfur carrier)-SH + AH2 + 2 S-adenosyl-L-methionine = 2-methylsulfanyl-N(6)-dimethylallyladenosine(37) in tRNA + (sulfur carrier)-H + 5'-deoxyadenosine + L-methionine + A + S-adenosyl-L-homocysteine + 2 H(+). Functionally, catalyzes the methylthiolation of N6-(dimethylallyl)adenosine (i(6)A), leading to the formation of 2-methylthio-N6-(dimethylallyl)adenosine (ms(2)i(6)A) at position 37 in tRNAs that read codons beginning with uridine. The protein is tRNA-2-methylthio-N(6)-dimethylallyladenosine synthase of Pelodictyon phaeoclathratiforme (strain DSM 5477 / BU-1).